The sequence spans 575 residues: Hemagglutinin-neuraminidase (575 aa).

At 1 to 34 (MAEKGKTNSSYWSTTRNDNSTVNTYIDTPAGKTH) the chain is on the intravirion side. Residues 35–55 (IWLLIATTMHTILSFIIMILC) form a helical membrane-spanning segment. Topologically, residues 56–575 (IDLIIKQDTC…SIPKICKITS (520 aa)) are virion surface. Asn77 carries an N-linked (GlcNAc...) asparagine; by host glycan. 4 disulfide bridges follow: Cys192–Cys216, Cys258–Cys271, Cys357–Cys469, and Cys463–Cys473. Positions 254 to 259 (NRKSCS) are involved in neuraminidase activity. N-linked (GlcNAc...) asparagine; by host glycans are attached at residues Asn499 and Asn511. A disulfide bond links Cys535 and Cys544.

The protein belongs to the paramyxoviruses hemagglutinin-neuraminidase family. In terms of assembly, homotetramer; composed of disulfide-linked homodimers. Interacts with F protein trimer.

The protein localises to the virion membrane. It is found in the host cell membrane. It carries out the reaction Hydrolysis of alpha-(2-&gt;3)-, alpha-(2-&gt;6)-, alpha-(2-&gt;8)- glycosidic linkages of terminal sialic acid residues in oligosaccharides, glycoproteins, glycolipids, colominic acid and synthetic substrates.. Its function is as follows. Attaches the virus to sialic acid-containing cell receptors and thereby initiating infection. Binding of HN protein to the receptor induces a conformational change that allows the F protein to trigger virion/cell membranes fusion. In terms of biological role, neuraminidase activity ensures the efficient spread of the virus by dissociating the mature virions from the neuraminic acid containing glycoproteins. The sequence is that of Hemagglutinin-neuraminidase (HN) from Human parainfluenza 1 virus (strain Washington/1957) (HPIV-1).